Consider the following 177-residue polypeptide: MASHDQSYKAGETMGRTEEKTNQMIGNIEDKAQAAKEKAQQAAQTAKDKTSQTAQAAKEKTQQTAQAAKEKTQQTAQAAKDETQQTAQAAKDKTQQTTEATKEKAQDTTGRAREKGSEMGQSTKETAQSGKDNSAGFLQQTGEKVKGMAQGATDAVKQTFGMANDDKDKDHFPTNRH.

Residues 1-177 are disordered; sequence MASHDQSYKA…DKDHFPTNRH (177 aa). Residues 28-39 are compositionally biased toward basic and acidic residues; sequence IEDKAQAAKEKA. A compositionally biased stretch (low complexity) spans 40–89; it reads QQAAQTAKDKTSQTAQAAKEKTQQTAQAAKEKTQQTAQAAKDETQQTAQA. 4 repeat units span residues 53-63, 64-74, 75-85, and 86-96. The segment at 53–96 is 4 X 11 AA approximate tandem repeats of T-A-Q-A-A-K-E-K-T-Q-Q; sequence TAQAAKEKTQQTAQAAKEKTQQTAQAAKDETQQTAQAAKDKTQQ. Over residues 90-117 the composition is skewed to basic and acidic residues; it reads AKDKTQQTTEATKEKAQDTTGRAREKGS. Residues 119–142 are compositionally biased toward polar residues; it reads MGQSTKETAQSGKDNSAGFLQQTG. Residues 164 to 177 are compositionally biased toward basic and acidic residues; the sequence is NDDKDKDHFPTNRH.

This sequence belongs to the LEA type 4 family. Highest expression is found in seeds. No expression detected in adult tissues.

The polypeptide is Late embryogenesis abundant protein 1 (Cicer arietinum (Chickpea)).